The following is a 378-amino-acid chain: UPF0754 membrane protein BC_0879 (378 aa).

Residues 357–377 (YLGALLGGMIGLVQGLLLLFL) form a helical membrane-spanning segment.

This sequence belongs to the UPF0754 family.

It localises to the cell membrane. In Bacillus cereus (strain ATCC 14579 / DSM 31 / CCUG 7414 / JCM 2152 / NBRC 15305 / NCIMB 9373 / NCTC 2599 / NRRL B-3711), this protein is UPF0754 membrane protein BC_0879.